The following is a 1123-amino-acid chain: uncharacterized protein (1123 aa).

This is an uncharacterized protein from Ictaluridae (bullhead catfishes).